A 435-amino-acid polypeptide reads, in one-letter code: Exodeoxyribonuclease 7 large subunit (435 aa).

Polar residues predominate over residues 1–10; it reads MRGTRVTETA. Disordered regions lie at residues 1-21 and 413-435; these read MRGT…GPPT and AGKA…PRGK.

Belongs to the XseA family. As to quaternary structure, heterooligomer composed of large and small subunits.

The protein localises to the cytoplasm. It carries out the reaction Exonucleolytic cleavage in either 5'- to 3'- or 3'- to 5'-direction to yield nucleoside 5'-phosphates.. Its function is as follows. Bidirectionally degrades single-stranded DNA into large acid-insoluble oligonucleotides, which are then degraded further into small acid-soluble oligonucleotides. The polypeptide is Exodeoxyribonuclease 7 large subunit (Leifsonia xyli subsp. xyli (strain CTCB07)).